The following is a 334-amino-acid chain: Formamidase (334 aa).

In terms of domain architecture, CN hydrolase spans 14 to 260 (FLVAAIQFPV…WEIVTGEIYP (247 aa)). The Proton acceptor role is filled by Glu60. Lys133 acts as the Proton donor in catalysis. Cys166 functions as the Nucleophile in the catalytic mechanism.

Belongs to the carbon-nitrogen hydrolase superfamily. Aliphatic amidase family.

The enzyme catalyses formamide + H2O = formate + NH4(+). Its function is as follows. Is an aliphatic amidase with a restricted substrate specificity, as it only hydrolyzes formamide. This is Formamidase from Helicobacter pylori (strain G27).